Here is a 215-residue protein sequence, read N- to C-terminus: Cytochrome b6 (215 aa).

A helical transmembrane segment spans residues 32–52; the sequence is IFYCLGGITLTCFLVQVATGF. A heme c-binding site is contributed by cysteine 35. 2 residues coordinate heme b: histidine 86 and histidine 100. 3 helical membrane passes run 90–110, 116–136, and 186–206; these read ASMMVLMMILHVFRVYLTGGF, LTWVTGVVLGVLTASFGVTGY, and LHTFVLPLLTAVFMLMHFPMI. Heme b-binding residues include histidine 187 and histidine 202.

This sequence belongs to the cytochrome b family. PetB subfamily. The 4 large subunits of the cytochrome b6-f complex are cytochrome b6, subunit IV (17 kDa polypeptide, PetD), cytochrome f and the Rieske protein, while the 4 small subunits are PetG, PetL, PetM and PetN. The complex functions as a dimer. Heme b serves as cofactor. Heme c is required as a cofactor.

It localises to the plastid. The protein localises to the chloroplast thylakoid membrane. Component of the cytochrome b6-f complex, which mediates electron transfer between photosystem II (PSII) and photosystem I (PSI), cyclic electron flow around PSI, and state transitions. The chain is Cytochrome b6 from Jasminum nudiflorum (Winter jasmine).